The sequence spans 398 residues: 1-deoxy-D-xylulose 5-phosphate reductoisomerase (398 aa).

NADPH is bound by residues T11, G12, S13, I14, and N125. A 1-deoxy-D-xylulose 5-phosphate-binding site is contributed by K126. Position 127 (E127) interacts with NADPH. D151 is a binding site for Mn(2+). 1-deoxy-D-xylulose 5-phosphate is bound by residues S152, E153, S186, and H209. A Mn(2+)-binding site is contributed by E153. G215 contacts NADPH. 1-deoxy-D-xylulose 5-phosphate is bound by residues S222, N227, K228, and E231. Position 231 (E231) interacts with Mn(2+).

This sequence belongs to the DXR family. It depends on Mg(2+) as a cofactor. Requires Mn(2+) as cofactor.

The enzyme catalyses 2-C-methyl-D-erythritol 4-phosphate + NADP(+) = 1-deoxy-D-xylulose 5-phosphate + NADPH + H(+). The protein operates within isoprenoid biosynthesis; isopentenyl diphosphate biosynthesis via DXP pathway; isopentenyl diphosphate from 1-deoxy-D-xylulose 5-phosphate: step 1/6. Catalyzes the NADPH-dependent rearrangement and reduction of 1-deoxy-D-xylulose-5-phosphate (DXP) to 2-C-methyl-D-erythritol 4-phosphate (MEP). This chain is 1-deoxy-D-xylulose 5-phosphate reductoisomerase, found in Acinetobacter baumannii (strain ACICU).